A 437-amino-acid chain; its full sequence is GTPase Era, mitochondrial (437 aa).

The N-terminal 20 residues, 1 to 20 (MAAPRRYCAGLVRALLGARQ), are a transit peptide targeting the mitochondrion. Residues 112 to 330 (RVLRVVLLGA…QYLLTQAQPG (219 aa)) enclose the Era-type G domain. The interval 120 to 127 (GAPNAGKS) is G1. 120 to 127 (GAPNAGKS) contacts GTP. Residues 146–150 (HTTRC) are G2. Positions 167–170 (DTPG) are G3. Residue 167–171 (DTPGI) coordinates GTP. Residue S173 is modified to Phosphoserine. 236–239 (NKVD) contributes to the GTP binding site. The segment at 236–239 (NKVD) is G4. A disordered region spans residues 270 to 292 (LRSRSSTHCPGPETEGPNAHSVR). Residues 308–310 (LSA) form a G5 region. Residues 360–437 (LPEEVPYGVQ…LIRLSVKLLK (78 aa)) enclose the KH type-2 domain.

This sequence belongs to the TRAFAC class TrmE-Era-EngA-EngB-Septin-like GTPase superfamily. Era GTPase family.

It is found in the mitochondrion matrix. The protein resides in the mitochondrion inner membrane. Functionally, probable GTPase that plays a role in the mitochondrial ribosomal small subunit assembly. Specifically binds the 12S mitochondrial rRNA (12S mt-rRNA) to a 33 nucleotide section delineating the 3' terminal stem-loop region. May act as a chaperone that protects the 12S mt-rRNA on the 28S mitoribosomal subunit during ribosomal small subunit assembly. This Mus musculus (Mouse) protein is GTPase Era, mitochondrial (Eral1).